We begin with the raw amino-acid sequence, 404 residues long: Putative aspartate aminotransferase, cytoplasmic 2 (404 aa).

The residue at position 249 (lysine 249) is an N6-(pyridoxal phosphate)lysine.

The protein belongs to the class-I pyridoxal-phosphate-dependent aminotransferase family. As to quaternary structure, homodimer. Requires pyridoxal 5'-phosphate as cofactor.

The protein resides in the cytoplasm. It catalyses the reaction L-aspartate + 2-oxoglutarate = oxaloacetate + L-glutamate. In Mus musculus (Mouse), this protein is Putative aspartate aminotransferase, cytoplasmic 2 (Got1l1).